A 465-amino-acid polypeptide reads, in one-letter code: Phospholipase A1-II 5 (465 aa).

The Acyl-ester intermediate role is filled by S233. Residues S233, D297, and H336 each act as charge relay system in the active site.

It belongs to the AB hydrolase superfamily. Lipase family.

Its subcellular location is the cytoplasm. In terms of biological role, acylhydrolase that catalyzes the hydrolysis of phospholipids at the sn-1 position. The polypeptide is Phospholipase A1-II 5 (Oryza sativa subsp. japonica (Rice)).